We begin with the raw amino-acid sequence, 453 residues long: Verruculogen prenyltransferase (453 aa).

Glu-89 lines the substrate pocket. Dimethylallyl diphosphate is bound by residues Arg-102, Lys-194, Tyr-196, Lys-273, Tyr-275, Tyr-378, Tyr-443, and Tyr-447.

Belongs to the tryptophan dimethylallyltransferase family.

It catalyses the reaction verruculogen + dimethylallyl diphosphate = fumitremorgin A + diphosphate. It functions in the pathway mycotoxin biosynthesis. In terms of biological role, verruculogen prenyltransferase; part of the gene cluster that mediates the biosynthesis of fumitremorgins, indole alkaloids that carry not only intriguing chemical structures, but also interesting biological and pharmacological activities. The biosynthesis of fumitremorgin-type alkaloids begins by condensation of the two amino acids L-tryptophan and L-proline to brevianamide F, catalyzed by the non-ribosomal peptide synthetase ftmPS/ftmA. Brevianamide F is then prenylated by the prenyltransferase ftmPT1/ftmB in the presence of dimethylallyl diphosphate, resulting in the formation of tryprostatin B. The three cytochrome P450 monooxygenases, ftmP450-1/ftmC, ftmP450-2/ftmE and ftmP450-3/FtmG, are responsible for the conversion of tryprostatin B to 6-hydroxytryprostatin B, tryprostatin A to fumitremorgin C and fumitremorgin C to 12,13-dihydroxyfumitremorgin C, respectively. The putative methyltransferase ftmMT/ftmD is expected for the conversion of 6-hydroxytryprostatin B to tryprostatin A. FtmPT2/FtmH catalyzes the prenylation of 12,13-dihydroxyfumitre-morgin C in the presence of dimethylallyl diphosphate, resulting in the formation of fumitremorgin B. Fumitremorgin B is further converted to verruculogen by ftmOx1/ftmF via the insertion of an endoperoxide bond between the two prenyl moieties. Finally, verruculogen is further converted to fumitremorgin A by the verruculogen prenyltransferase ftmPT3. This Neosartorya fischeri (strain ATCC 1020 / DSM 3700 / CBS 544.65 / FGSC A1164 / JCM 1740 / NRRL 181 / WB 181) (Aspergillus fischerianus) protein is Verruculogen prenyltransferase.